We begin with the raw amino-acid sequence, 424 residues long: UDP-N-acetylglucosamine 1-carboxyvinyltransferase (424 aa).

22–23 provides a ligand contact to phosphoenolpyruvate; sequence KN. Residue Arg98 coordinates UDP-N-acetyl-alpha-D-glucosamine. The active-site Proton donor is the Cys122. Cys122 is subject to 2-(S-cysteinyl)pyruvic acid O-phosphothioketal. UDP-N-acetyl-alpha-D-glucosamine is bound by residues 127 to 131, Asp312, and Ile334; that span reads RPVDQ.

Belongs to the EPSP synthase family. MurA subfamily.

The protein resides in the cytoplasm. The catalysed reaction is phosphoenolpyruvate + UDP-N-acetyl-alpha-D-glucosamine = UDP-N-acetyl-3-O-(1-carboxyvinyl)-alpha-D-glucosamine + phosphate. The protein operates within cell wall biogenesis; peptidoglycan biosynthesis. Its function is as follows. Cell wall formation. Adds enolpyruvyl to UDP-N-acetylglucosamine. This Xanthomonas axonopodis pv. citri (strain 306) protein is UDP-N-acetylglucosamine 1-carboxyvinyltransferase.